A 396-amino-acid chain; its full sequence is Elongation factor Tu (396 aa).

Positions 10-206 (KPHVNIGTIG…AVDEYIPDPV (197 aa)) constitute a tr-type G domain. A G1 region spans residues 19 to 26 (GHVDHGKT). 19–26 (GHVDHGKT) provides a ligand contact to GTP. T26 provides a ligand contact to Mg(2+). The tract at residues 62–66 (GITIN) is G2. Positions 83 to 86 (DAPG) are G3. Residues 83–87 (DAPGH) and 138–141 (NKSD) each bind GTP. A G4 region spans residues 138-141 (NKSD). A G5 region spans residues 176–178 (SGL).

Belongs to the TRAFAC class translation factor GTPase superfamily. Classic translation factor GTPase family. EF-Tu/EF-1A subfamily. As to quaternary structure, monomer.

The protein localises to the cytoplasm. The enzyme catalyses GTP + H2O = GDP + phosphate + H(+). Functionally, GTP hydrolase that promotes the GTP-dependent binding of aminoacyl-tRNA to the A-site of ribosomes during protein biosynthesis. This chain is Elongation factor Tu, found in Micrococcus luteus (strain ATCC 4698 / DSM 20030 / JCM 1464 / CCM 169 / CCUG 5858 / IAM 1056 / NBRC 3333 / NCIMB 9278 / NCTC 2665 / VKM Ac-2230) (Micrococcus lysodeikticus).